The sequence spans 493 residues: Transcript termination protein A18 (493 aa).

Residues methionine 100–serine 256 form the Helicase ATP-binding domain. Leucine 113–threonine 120 contributes to the ATP binding site. The short motif at aspartate 206–histidine 209 is the DESH box element.

Belongs to the helicase family. Poxviruses subfamily. In terms of assembly, interacts with G2. Might be part of a transcription complex composed at least of G2, A18, and H5.

The protein localises to the virion. Its function is as follows. DNA helicase which seems to act as a postreplicative transcription termination factor. Involved in ATP-dependent release of nascent RNA. Forms a stable complex with single-stranded DNA, and to a lesser extent RNA. The chain is Transcript termination protein A18 from Vaccinia virus (strain Tian Tan) (VACV).